A 161-amino-acid chain; its full sequence is Epithelial membrane protein 2 (161 aa).

Helical transmembrane passes span 1 to 21 (MLVILAFIILFHITSAILLFI), 67 to 87 (TMILATILCCVGFFVFILQLF), 95 to 115 (FVFTAIIQLLSAFCVMTGASI), and 137 to 157 (FVVAWVAFPMTLLSGLMYLVL).

The protein belongs to the PMP-22/EMP/MP20 family. As to expression, expressed in the arches, orbits, pectoral fins, vessels, pronephric renal tubules, and glomeruli.

The protein resides in the golgi apparatus membrane. It localises to the cell membrane. Its subcellular location is the apical cell membrane. It is found in the membrane raft. The protein localises to the cytoplasm. The protein resides in the nucleus. It localises to the perinuclear region. Functions as a key regulator of cell membrane composition by regulating protein surface expression. Also, plays a role in regulation of processes including cell migration, cell proliferation, cell contraction and cell adhesion. May play a role in glomerular filtration. This chain is Epithelial membrane protein 2 (emp2), found in Danio rerio (Zebrafish).